We begin with the raw amino-acid sequence, 258 residues long: Small ribosomal subunit protein uS2 (258 aa).

The protein belongs to the universal ribosomal protein uS2 family.

The chain is Small ribosomal subunit protein uS2 from Leuconostoc citreum (strain KM20).